We begin with the raw amino-acid sequence, 156 residues long: Cell division protein SepF (156 aa).

Residues 23–36 are compositionally biased toward basic and acidic residues; sequence SYEKEQTDMKKQQD. The interval 23–48 is disordered; sequence SYEKEQTDMKKQQDPPEQQDVTFPKA. Polar residues predominate over residues 37–48; sequence PPEQQDVTFPKA.

The protein belongs to the SepF family. Homodimer. Interacts with FtsZ.

The protein resides in the cytoplasm. Functionally, cell division protein that is part of the divisome complex and is recruited early to the Z-ring. Probably stimulates Z-ring formation, perhaps through the cross-linking of FtsZ protofilaments. Its function overlaps with FtsA. This chain is Cell division protein SepF, found in Bacillus cereus (strain ATCC 10987 / NRS 248).